A 247-amino-acid chain; its full sequence is uncharacterized protein (247 aa).

2 stretches are compositionally biased toward low complexity: residues 1-12 (MFSPQQPMRNYP) and 21-43 (PNQRMMGRRPPNMRGPSFGAQQQ). Disordered regions lie at residues 1–43 (MFSP…AQQQ) and 157–247 (LSKS…RLYI). Basic and acidic residues-rich tracts occupy residues 170–196 (ESEKQSVSEESSEKEKETETKTSDGNK) and 210–229 (KTTDNKEQELKTSAPKKKEA).

This is an uncharacterized protein from Bacillus subtilis (strain 168).